Here is a 244-residue protein sequence, read N- to C-terminus: Methylthioribulose-1-phosphate dehydratase (244 aa).

Residue Cys-104 coordinates substrate. Residues His-122 and His-124 each coordinate Zn(2+). Residue Glu-148 is the Proton donor/acceptor of the active site. His-204 contributes to the Zn(2+) binding site.

It belongs to the aldolase class II family. MtnB subfamily. It depends on Zn(2+) as a cofactor.

Its subcellular location is the cytoplasm. The enzyme catalyses 5-(methylsulfanyl)-D-ribulose 1-phosphate = 5-methylsulfanyl-2,3-dioxopentyl phosphate + H2O. It participates in amino-acid biosynthesis; L-methionine biosynthesis via salvage pathway; L-methionine from S-methyl-5-thio-alpha-D-ribose 1-phosphate: step 2/6. Its function is as follows. Catalyzes the dehydration of methylthioribulose-1-phosphate (MTRu-1-P) into 2,3-diketo-5-methylthiopentyl-1-phosphate (DK-MTP-1-P). This is Methylthioribulose-1-phosphate dehydratase from Cryptococcus neoformans var. neoformans serotype D (strain B-3501A) (Filobasidiella neoformans).